The sequence spans 609 residues: UvrABC system protein C (609 aa).

The region spanning 19–97 (ISPGCYLWKS…IKKHNPRFNV (79 aa)) is the GIY-YIG domain. Residues 208–243 (ESLVGDLSIKMSASSNRMDFEKAARYRDMLQRIQNF) enclose the UVR domain.

It belongs to the UvrC family. In terms of assembly, interacts with UvrB in an incision complex.

It is found in the cytoplasm. Its function is as follows. The UvrABC repair system catalyzes the recognition and processing of DNA lesions. UvrC both incises the 5' and 3' sides of the lesion. The N-terminal half is responsible for the 3' incision and the C-terminal half is responsible for the 5' incision. This Leptospira borgpetersenii serovar Hardjo-bovis (strain JB197) protein is UvrABC system protein C.